The primary structure comprises 117 residues: UPF0251 protein DehaBAV1_0135 (117 aa).

This sequence belongs to the UPF0251 family.

The sequence is that of UPF0251 protein DehaBAV1_0135 from Dehalococcoides mccartyi (strain ATCC BAA-2100 / JCM 16839 / KCTC 5957 / BAV1).